Consider the following 441-residue polypeptide: Ribulose bisphosphate carboxylase large chain (441 aa).

Substrate contacts are provided by Asn-89 and Thr-139. Lys-141 (proton acceptor) is an active-site residue. Lys-143 lines the substrate pocket. The Mg(2+) site is built by Lys-167, Asp-169, and Glu-170. Lys-167 is modified (N6-carboxylysine). The Proton acceptor role is filled by His-260. Positions 261, 293, and 345 each coordinate substrate.

The protein belongs to the RuBisCO large chain family. Type I subfamily. As to quaternary structure, heterohexadecamer of 8 large chains and 8 small chains; disulfide-linked. The disulfide link is formed within the large subunit homodimers. Mg(2+) is required as a cofactor. The disulfide bond which can form in the large chain dimeric partners within the hexadecamer appears to be associated with oxidative stress and protein turnover.

The protein localises to the plastid. Its subcellular location is the chloroplast. The enzyme catalyses 2 (2R)-3-phosphoglycerate + 2 H(+) = D-ribulose 1,5-bisphosphate + CO2 + H2O. It catalyses the reaction D-ribulose 1,5-bisphosphate + O2 = 2-phosphoglycolate + (2R)-3-phosphoglycerate + 2 H(+). Its function is as follows. RuBisCO catalyzes two reactions: the carboxylation of D-ribulose 1,5-bisphosphate, the primary event in carbon dioxide fixation, as well as the oxidative fragmentation of the pentose substrate in the photorespiration process. Both reactions occur simultaneously and in competition at the same active site. This is Ribulose bisphosphate carboxylase large chain from Symphoricarpos albus (Common snowberry).